The primary structure comprises 35 residues: Beta-amanitin proprotein (35 aa).

A propeptide spanning residues Met1–Pro10 is cleaved from the precursor. Residues Ile11–Pro18 constitute a cross-link (cyclopeptide (Ile-Pro)). The 2'-cysteinyl-6'-hydroxytryptophan sulfoxide (Trp-Cys) cross-link spans Trp12 to Cys16. Residues Cys19 to Cys35 constitute a propeptide that is removed on maturation.

Belongs to the MSDIN fungal toxin family. Processed by the macrocyclase-peptidase enzyme POPB to yield a toxic cyclic octapeptide. POPB first removes 10 residues from the N-terminus. Conformational trapping of the remaining peptide forces the enzyme to release this intermediate rather than proceed to macrocyclization. The enzyme rebinds the remaining peptide in a different conformation and catalyzes macrocyclization of the N-terminal 8 residues. As to expression, expressed in basidiocarps.

Toxin belonging to the bicyclic octapeptides amatoxins that acts by binding non-competitively to RNA polymerase II and greatly slowing the elongation of transcripts from target promoters. This Amanita exitialis (Guangzhou destroying angel) protein is Beta-amanitin proprotein.